The sequence spans 245 residues: 1-(5-phosphoribosyl)-5-[(5-phosphoribosylamino)methylideneamino] imidazole-4-carboxamide isomerase (245 aa).

The active-site Proton acceptor is D7. D129 serves as the catalytic Proton donor.

Belongs to the HisA/HisF family.

Its subcellular location is the cytoplasm. It carries out the reaction 1-(5-phospho-beta-D-ribosyl)-5-[(5-phospho-beta-D-ribosylamino)methylideneamino]imidazole-4-carboxamide = 5-[(5-phospho-1-deoxy-D-ribulos-1-ylimino)methylamino]-1-(5-phospho-beta-D-ribosyl)imidazole-4-carboxamide. Its pathway is amino-acid biosynthesis; L-histidine biosynthesis; L-histidine from 5-phospho-alpha-D-ribose 1-diphosphate: step 4/9. This Salmonella dublin (strain CT_02021853) protein is 1-(5-phosphoribosyl)-5-[(5-phosphoribosylamino)methylideneamino] imidazole-4-carboxamide isomerase.